A 154-amino-acid chain; its full sequence is Transcriptional repressor NrdR (154 aa).

The segment at 3 to 34 (CPFCTHPDTRVADSRLMEERNAVRRRRHCPNC) is a zinc-finger region. The ATP-cone domain maps to 49–139 (PAVIGPDKKR…LHKRFDNPAD (91 aa)).

The protein belongs to the NrdR family. The cofactor is Zn(2+).

Its function is as follows. Negatively regulates transcription of bacterial ribonucleotide reductase nrd genes and operons by binding to NrdR-boxes. The sequence is that of Transcriptional repressor NrdR from Neisseria meningitidis serogroup A / serotype 4A (strain DSM 15465 / Z2491).